A 249-amino-acid polypeptide reads, in one-letter code: DNA polymerase sliding clamp 1 (249 aa).

It belongs to the PCNA family. In terms of assembly, forms heterodimers with PCNA2, which then recruit PCNA3; does not form homotrimers. The heterodimers interact with RfcS homotetramers. Heterotrimer which circularizes head-to-tail (head is at N-terminus, tail is at C-terminus) to form a toroid; DNA passes through its center. Replication factor C (RFC) is required to load the toroid on the DNA. Heterotrimer interacts, probably via this subunit, with flap endonuclease 1 (fen), Hjc, Dpo4, and XPF.

Functionally, one of the sliding clamp subunits that acts as a moving platform for DNA processing. Responsible for tethering the catalytic subunit of DNA polymerase to DNA during high-speed replication. Heterotrimer stimulates the Holliday junction resolvase Hjc. DNA polymerase I, DNA ligase and the flap endonuclease may be constitutively associated with the PCNA heterotrimer forming a scanning complex able to couple DNA synthesis and Okazaki fragment maturation. The chain is DNA polymerase sliding clamp 1 from Saccharolobus solfataricus (strain ATCC 35092 / DSM 1617 / JCM 11322 / P2) (Sulfolobus solfataricus).